The primary structure comprises 178 residues: Acireductone dioxygenase 1 (178 aa).

Residues His-84, His-86, Glu-90, and His-130 each contribute to the Fe(2+) site. His-84, His-86, Glu-90, and His-130 together coordinate Ni(2+).

The protein belongs to the acireductone dioxygenase (ARD) family. Requires Fe(2+) as cofactor. The cofactor is Ni(2+).

It localises to the cytoplasm. The protein resides in the nucleus. The catalysed reaction is 1,2-dihydroxy-5-(methylsulfanyl)pent-1-en-3-one + O2 = 4-methylsulfanyl-2-oxobutanoate + formate + 2 H(+). It catalyses the reaction 1,2-dihydroxy-5-(methylsulfanyl)pent-1-en-3-one + O2 = 3-(methylsulfanyl)propanoate + CO + formate + 2 H(+). It functions in the pathway amino-acid biosynthesis; L-methionine biosynthesis via salvage pathway; L-methionine from S-methyl-5-thio-alpha-D-ribose 1-phosphate: step 5/6. Catalyzes 2 different reactions between oxygen and the acireductone 1,2-dihydroxy-3-keto-5-methylthiopentene (DHK-MTPene) depending upon the metal bound in the active site. Fe-containing acireductone dioxygenase (Fe-ARD) produces formate and 2-keto-4-methylthiobutyrate (KMTB), the alpha-ketoacid precursor of methionine in the methionine recycle pathway. Ni-containing acireductone dioxygenase (Ni-ARD) produces methylthiopropionate, carbon monoxide and formate, and does not lie on the methionine recycle pathway. The sequence is that of Acireductone dioxygenase 1 from Coprinopsis cinerea (strain Okayama-7 / 130 / ATCC MYA-4618 / FGSC 9003) (Inky cap fungus).